The chain runs to 680 residues: Anosmin-1 (680 aa).

An N-terminal signal peptide occupies residues 1–24 (MVPGVPGAVLTLCLWLAASSGCLA). 5 disulfides stabilise this stretch: C49/C83, C53/C77, C86/C105, C90/C101, and C116/C120. A glycan (N-linked (GlcNAc...) asparagine) is linked at N71. A WAP domain is found at 127–176 (LLVKQGDCPAPEKASGFAAACVESCEVDNECSGVKKCCSNGCGHTCQVPK). Fibronectin type-III domains follow at residues 186-287 (PRKE…SKDP), 292-400 (APAN…THAT), 425-523 (PTRP…TPPC), and 550-658 (KPEN…LPPS). N209, N300, N470, N553, and N564 each carry an N-linked (GlcNAc...) asparagine glycan. The tract at residues 642 to 680 (EGPATIKTFRTPELPPSSAHRSHLKHRHPHHYKPSPERY) is disordered. Residues 661 to 674 (HRSHLKHRHPHHYK) are compositionally biased toward basic residues.

Interacts with FGFR1; this interaction does not interfere with FGF2-binding to FGFR1. Binds heparin. Heparin may promote or interfere with ANOS1-FGFR1-FGF2 complex formation depending on the sequential order of its binding to the various constituents. For instance, heparin-ANOS1 interaction favors subsequent binding to pre-existing binary FGFR1-FGF2 complex, while heparin-FGF2 complex does not interact with ANOS1-FGFR1. Post-translationally, N-glycosylated. In terms of processing, may be proteolytically cleaved at the cell surface and released from the cell surface. Expressed in the cerebellum (at protein level).

Its subcellular location is the cell membrane. The protein localises to the secreted. In terms of biological role, has a dual branch-promoting and guidance activity, which may play an important role in the patterning of mitral and tufted cell collaterals to the olfactory cortex. Chemoattractant for fetal olfactory epithelial cells. The sequence is that of Anosmin-1 from Homo sapiens (Human).